A 243-amino-acid chain; its full sequence is PF03932 family protein CutC (243 aa).

This sequence belongs to the CutC family.

Its subcellular location is the cytoplasm. The sequence is that of PF03932 family protein CutC from Parabacteroides distasonis (strain ATCC 8503 / DSM 20701 / CIP 104284 / JCM 5825 / NCTC 11152).